A 1189-amino-acid polypeptide reads, in one-letter code: Nucleolar protein NET1 (1189 aa).

A phosphoserine mark is found at S60 and S166. Disordered stretches follow at residues 160–260 and 345–1189; these read SKLN…ISSG and TAQD…FKKK. The span at 166–180 shows a compositional bias: low complexity; it reads SPQSVQPQQQIPSSS. The segment covering 200–210 has biased composition (polar residues); it reads IRSATNGSMRV. Residues S231 and S252 each carry the phosphoserine modification. The segment covering 244 to 253 has biased composition (pro residues); sequence LPPPTQPQSP. Basic and acidic residues predominate over residues 368–381; that stretch reads PEPRISEIEKELKE. Over residues 391–407 the composition is skewed to low complexity; it reads PAKAAKIPMKKPYLENG. Over residues 432–450 the composition is skewed to polar residues; the sequence is ASLQRSQSSIADNNGSPVK. Residues S437, S439, S447, and S452 each carry the phosphoserine modification. Residues 470–486 show a composition bias toward polar residues; it reads ASNTSITKSSNGESWGK. A Phosphoserine modification is found at S497. Residues 526 to 543 are compositionally biased toward basic and acidic residues; sequence NQVREKEDTNDKLLEKEI. Positions 590 to 601 are enriched in acidic residues; the sequence is IEDDGNDNDEVD. Positions 641-657 are enriched in polar residues; sequence SRTSGNSKNSKPYTTVL. A compositionally biased stretch (basic and acidic residues) spans 659–668; it reads KDIDNSKPDP. Position 676 is a phosphothreonine (T676). Residues 682–691 show a composition bias toward low complexity; sequence KRAAQLLAGA. The span at 692–702 shows a compositional bias: basic and acidic residues; the sequence is KKNEVPQKSTE. Acidic residues predominate over residues 710–725; sequence TDDESESGIETDFSSD. Residues 756–777 are compositionally biased toward basic and acidic residues; sequence KDSKIINKEVDEERNDKRDSQK. The segment covering 778 to 792 has biased composition (polar residues); it reads KSAVSESSVTNSKIS. Basic and acidic residues predominate over residues 806 to 815; that stretch reads KQNEATKVET. A compositionally biased stretch (low complexity) spans 822 to 833; sequence SSFPVVGGSPSV. S830 is modified (phosphoserine). 3 stretches are compositionally biased toward basic and acidic residues: residues 884-897, 905-919, and 945-954; these read DLNK…EPEK, ANDK…DSKS, and ANDKLKDLKA. Positions 969 to 999 are enriched in low complexity; sequence SNEKNNSSANDDDSSSSGSSTEDESSSSSSS. A compositionally biased stretch (polar residues) spans 1023 to 1039; that stretch reads RSSSKIEAPSPSVNKKI. At T1042 the chain carries Phosphothreonine. Residues 1055-1070 show a composition bias toward low complexity; it reads SSPPSVKSKTTSNPSS. Phosphoserine is present on residues S1056 and S1059. Over residues 1095-1109 the composition is skewed to basic and acidic residues; the sequence is PDVKEKTSKSNEKSQ. 2 stretches are compositionally biased toward low complexity: residues 1123-1137 and 1158-1169; these read DSDS…SDSS and SFISAKSASAAL.

To yeast YKR010c. Component of the RENT complex which is composed of at least NET1, CDC14 and SIR2. Interacts with NSI1. In terms of processing, phosphorylated by CDC5.

Its subcellular location is the nucleus. It localises to the nucleolus. In terms of biological role, has a role in chromosome maintenance and is involved in mitotic exit. Inhibits the action of CDC14 by sequestering it in the nucleolus. Also binds to RNA polymerase I and stimulates rRNA synthesis. Influences RDNA chromatin by tethering SIR2 to rDNA in the nucleolus. In Saccharomyces cerevisiae (strain ATCC 204508 / S288c) (Baker's yeast), this protein is Nucleolar protein NET1 (NET1).